The following is a 51-amino-acid chain: Mitochondrial import receptor subunit TOM5 homolog (51 aa).

The residue at position 1 (M1) is an N-acetylmethionine. Residue K10 forms a Glycyl lysine isopeptide (Lys-Gly) (interchain with G-Cter in SUMO2) linkage. A helical membrane pass occupies residues 27-45 (SIRNFLIYVALLRVTPFIL).

The protein belongs to the Tom5 family. As to quaternary structure, forms part of the preprotein translocase complex of the outer mitochondrial membrane (TOM complex) which consists of at least 7 different proteins (TOMM5, TOMM6, TOMM7, TOMM20, TOMM22, TOMM40 and TOMM70).

It is found in the mitochondrion outer membrane. The protein is Mitochondrial import receptor subunit TOM5 homolog of Bos taurus (Bovine).